We begin with the raw amino-acid sequence, 441 residues long: Phenylalanine-4-hydroxylase (441 aa).

The ACT domain maps to Phe-23 to Asn-102. Residues His-273, His-278, and Glu-318 each coordinate Fe cation.

The protein belongs to the biopterin-dependent aromatic amino acid hydroxylase family. In terms of assembly, homotetramer. Requires Fe(2+) as cofactor.

The enzyme catalyses (6R)-L-erythro-5,6,7,8-tetrahydrobiopterin + L-phenylalanine + O2 = (4aS,6R)-4a-hydroxy-L-erythro-5,6,7,8-tetrahydrobiopterin + L-tyrosine. The catalysed reaction is (6R)-L-erythro-5,6,7,8-tetrahydrobiopterin + L-tryptophan + O2 = 5-hydroxy-L-tryptophan + (4aS,6R)-4a-hydroxy-L-erythro-5,6,7,8-tetrahydrobiopterin. The protein operates within amino-acid degradation; L-phenylalanine degradation; acetoacetate and fumarate from L-phenylalanine: step 1/6. Functionally, catalyzes the hydroxylation of L-phenylalanine. Hydroxylates L-tryptophan to 5-hydroxy-L-tryptophan but does not hydroxylate L-tyrosine to L-DOPA. It uses D-threo-tetrahydrodictyopterin (DH4), also known as dictyoperin, as a cofactor. This is Phenylalanine-4-hydroxylase (pah) from Dictyostelium discoideum (Social amoeba).